Consider the following 481-residue polypeptide: MIKIETVLVILKEDHNFRDIVKGEEYFFSYSGLTFDSISYDSREADASTLFFVKGEAFKKEFLEKAVSVGLRFYISETDFQVGIPVLLVNDVKQAMSLLAMEFYGHPEKKLKLLAFTGTKGKTTTAYFTYQILSQSHRPALLSTMNTTLDGETFFKSTLTTPESLDLIKMMAQALANDRTHLIMEVSSQAYLKKRVYGLTFDVGVFLNISPDHIGPIEHPTFEDYFYNKRLLMDNSRAVIVNSGMDHFQIVKEQVASLEHDFYGADSSNTIKDSQAFSFEATGKLAGNYDIQLIGRFNQENAVAAGLACLRLGASLEDIKKGIAATRVPGRMEVLTQKNGAKVFVDYAHNGVSLRNLLSVVEEHQKGKIILLLGATGNKGESRRKDFGLLLNQHPELTVILTADDPNYEDPLAIAEEIASYISYPVEKIADREEAIKKALSLTEREGDAVILAGKGADAYQIVEGEKVAYPGDYALAEKYL.

S42 lines the UDP-N-acetyl-alpha-D-muramoyl-L-alanyl-D-glutamate pocket. 118-124 (GTKGKTT) contributes to the ATP binding site. UDP-N-acetyl-alpha-D-muramoyl-L-alanyl-D-glutamate is bound by residues 160 to 161 (TT), S187, and R195. The residue at position 229 (K229) is an N6-carboxylysine. Residues 404-407 (DDPN) carry the L-lysine recognition motif motif.

It belongs to the MurCDEF family. MurE subfamily. Post-translationally, carboxylation is probably crucial for Mg(2+) binding and, consequently, for the gamma-phosphate positioning of ATP.

The protein resides in the cytoplasm. The enzyme catalyses UDP-N-acetyl-alpha-D-muramoyl-L-alanyl-D-glutamate + L-lysine + ATP = UDP-N-acetyl-alpha-D-muramoyl-L-alanyl-gamma-D-glutamyl-L-lysine + ADP + phosphate + H(+). It functions in the pathway cell wall biogenesis; peptidoglycan biosynthesis. Functionally, catalyzes the addition of L-lysine to the nucleotide precursor UDP-N-acetylmuramoyl-L-alanyl-D-glutamate (UMAG) in the biosynthesis of bacterial cell-wall peptidoglycan. The protein is UDP-N-acetylmuramoyl-L-alanyl-D-glutamate--L-lysine ligase of Streptococcus sanguinis (strain SK36).